The sequence spans 216 residues: Probable nicotinate-nucleotide adenylyltransferase (216 aa).

Belongs to the NadD family.

The enzyme catalyses nicotinate beta-D-ribonucleotide + ATP + H(+) = deamido-NAD(+) + diphosphate. Its pathway is cofactor biosynthesis; NAD(+) biosynthesis; deamido-NAD(+) from nicotinate D-ribonucleotide: step 1/1. Functionally, catalyzes the reversible adenylation of nicotinate mononucleotide (NaMN) to nicotinic acid adenine dinucleotide (NaAD). The polypeptide is Probable nicotinate-nucleotide adenylyltransferase (Buchnera aphidicola subsp. Schizaphis graminum (strain Sg)).